Reading from the N-terminus, the 407-residue chain is D-3-phosphoglycerate dehydrogenase (407 aa).

NAD(+) is bound by residues 161–162 (HI), aspartate 181, 238–240 (ASR), and aspartate 264. The active site involves arginine 240. Residue glutamate 269 is part of the active site. The active-site Proton donor is the histidine 292. 292–295 (HIGG) lines the NAD(+) pocket. Residues 340–407 (RILNIHNNKP…PNSIKTRVLY (68 aa)) enclose the ACT domain.

The protein belongs to the D-isomer specific 2-hydroxyacid dehydrogenase family.

It catalyses the reaction (2R)-3-phosphoglycerate + NAD(+) = 3-phosphooxypyruvate + NADH + H(+). The catalysed reaction is (R)-2-hydroxyglutarate + NAD(+) = 2-oxoglutarate + NADH + H(+). Its pathway is amino-acid biosynthesis; L-serine biosynthesis; L-serine from 3-phospho-D-glycerate: step 1/3. Its function is as follows. Catalyzes the reversible oxidation of 3-phospho-D-glycerate to 3-phosphonooxypyruvate, the first step of the phosphorylated L-serine biosynthesis pathway. Also catalyzes the reversible oxidation of 2-hydroxyglutarate to 2-oxoglutarate. This Dictyostelium discoideum (Social amoeba) protein is D-3-phosphoglycerate dehydrogenase (serA).